Reading from the N-terminus, the 334-residue chain is Methionine adenosyltransferase 2 subunit beta (334 aa).

NADP(+)-binding positions include 37-40 (TGLL), 60-62 (FRR), 71-72 (NL), cysteine 93, arginine 97, tyrosine 159, and leucine 185. The residue at position 309 (threonine 309) is a Phosphothreonine. Residues 319 to 334 (LWPFLIDKRWRQTVFH) are required for interaction with MAT2A.

Belongs to the dTDP-4-dehydrorhamnose reductase family. MAT2B subfamily. As to quaternary structure, heterotrimer; composed of a catalytic MAT2A homodimer that binds one regulatory MAT2B chain. Heterohexamer; composed of a central, catalytic MAT2A homotetramer flanked on either side by a regulatory MAT2B chain. NADP binding increases the affinity for MAT2A.

It participates in amino-acid biosynthesis; S-adenosyl-L-methionine biosynthesis; S-adenosyl-L-methionine from L-methionine: step 1/1. Regulatory subunit of S-adenosylmethionine synthetase 2, an enzyme that catalyzes the formation of S-adenosylmethionine from methionine and ATP. Regulates MAT2A catalytic activity by changing its kinetic properties, increasing its affinity for L-methionine. Can bind NADP (in vitro). In Rattus norvegicus (Rat), this protein is Methionine adenosyltransferase 2 subunit beta (Mat2b).